Consider the following 477-residue polypeptide: Acetolactate synthase small subunit 2, chloroplastic (477 aa).

A chloroplast-targeting transit peptide spans 1 to 53; sequence MAATTTATSLFSSRLHFQNQNQGYGFPAKTPNSLQVNQIIDGRKMRNATVLSA. ACT domains follow at residues 78–150 and 309–383; these read TISV…DLSK and TLSL…NITH. L-valine-binding residues include D85, I89, I90, N103, I104, N316, V320, L321, N334, and I335.

This sequence belongs to the acetolactate synthase small subunit family. The acetolactate synthase complex contains 4 homodimers of the large catalytic subunits, and 1 homotetramer of the small regulatory subunits. Expressed in roots in the vascular tissuem in cells around the quiescent center, in floral organs at the tips of young siliques and in the joint region between the silique and the pedicel. Barely detectable in mature leaves or siliques.

The protein localises to the plastid. It is found in the chloroplast. Its subcellular location is the peroxisome. It functions in the pathway amino-acid biosynthesis; L-isoleucine biosynthesis; L-isoleucine from 2-oxobutanoate: step 1/4. It participates in amino-acid biosynthesis; L-valine biosynthesis; L-valine from pyruvate: step 1/4. Regulatory subunit of acetohydroxy-acid synthase. Involved in the feed-back inhibition by branched-chain amino acids but not in herbicide tolerance. May play a role in valine and isoleucine-mediated feedback inhibition in roots. In vitro, inhibited by valine, but not leucine or isoleucine. Required for reproductive development and sodium homeostasis. The polypeptide is Acetolactate synthase small subunit 2, chloroplastic (Arabidopsis thaliana (Mouse-ear cress)).